We begin with the raw amino-acid sequence, 468 residues long: Hydroxymethylglutaryl-CoA lyase, mitochondrial (468 aa).

The region spanning 168–435 is the Pyruvate carboxyltransferase domain; it reads VKIVEVGPRD…HTNVDLGKLI (268 aa). Residue Arg-176 participates in substrate binding. 3 residues coordinate a divalent metal cation: Asp-177, His-368, and His-370. The active site involves Cys-401. Asn-410 provides a ligand contact to a divalent metal cation.

The protein belongs to the HMG-CoA lyase family. As to quaternary structure, homodimer. Requires a divalent metal cation as cofactor.

It localises to the mitochondrion matrix. It catalyses the reaction (3S)-3-hydroxy-3-methylglutaryl-CoA = acetoacetate + acetyl-CoA. Its pathway is metabolic intermediate metabolism; (S)-3-hydroxy-3-methylglutaryl-CoA degradation; acetoacetate from (S)-3-hydroxy-3-methylglutaryl-CoA: step 1/1. Its function is as follows. Involved in the catabolism of branched amino acids such as leucine. The chain is Hydroxymethylglutaryl-CoA lyase, mitochondrial (HMGCL) from Arabidopsis thaliana (Mouse-ear cress).